A 257-amino-acid polypeptide reads, in one-letter code: Inositol diphosphatase DSP2 (257 aa).

The Tyrosine-protein phosphatase domain occupies 66–251 (NFSMVDNGIF…VSGLKHTPMS (186 aa)). Residues isoleucine 168 and lysine 172 each contribute to the 1D-myo-inositol hexakisphosphate site. The active-site Phosphocysteine intermediate is cysteine 192.

The protein belongs to the protein-tyrosine phosphatase family. Atypical dual-specificity phosphatase Siw14-like subfamily. As to expression, expressed in roots, leaves, stems, flowers and siliques.

The enzyme catalyses 5-diphospho-1D-myo-inositol 1,2,3,4,6-pentakisphosphate + H2O = 1D-myo-inositol hexakisphosphate + phosphate + H(+). It catalyses the reaction 1,5-bis(diphospho)-1D-myo-inositol 2,3,4,6-tetrakisphosphate + H2O = 1-diphospho-1D-myo-inositol 2,3,4,5,6-pentakisphosphate + phosphate + 2 H(+). The catalysed reaction is 3,5-bis(diphospho)-1D-myo-inositol 1,2,4,6-tetrakisphosphate + H2O = 3-diphospho-1D-myo-inositol 1,2,4,5,6-pentakisphosphate + phosphate + 2 H(+). It carries out the reaction 6-diphospho-1D-myo-inositol pentakisphosphate + H2O = 1D-myo-inositol hexakisphosphate + phosphate + H(+). Its function is as follows. Cleaves the beta-phosphate at the 5-position of soluble inositol pyrophosphates. Has highest activity on 5-diphosphoinositol 1,2,3,4,6-pentakisphosphate (5-InsP(7)), 1,5-bis-diphosphoinositol 2,3,4,6-tetrakisphosphate (1,5-InsP(8)) and 3,5-InsP(8). Possesses phosphotyrosine phosphatase activity in vitro. Dephosphorylates the phosphoinositides PI(3,5)P2. Hydrolyzes para-nitrophenyl phosphate and O-methylfluorescein phosphate in vitro. The sequence is that of Inositol diphosphatase DSP2 from Arabidopsis thaliana (Mouse-ear cress).